Consider the following 201-residue polypeptide: Superoxide dismutase [Mn] (201 aa).

The Mn(2+) site is built by H27, H81, D163, and H167.

It belongs to the iron/manganese superoxide dismutase family. Homodimer. It depends on Mn(2+) as a cofactor.

It is found in the secreted. The catalysed reaction is 2 superoxide + 2 H(+) = H2O2 + O2. In terms of biological role, destroys superoxide anion radicals which are normally produced within the cells and which are toxic to biological systems. In Streptococcus pyogenes serotype M1, this protein is Superoxide dismutase [Mn] (sodA).